A 298-amino-acid polypeptide reads, in one-letter code: tRNA-cytidine(32) 2-sulfurtransferase (298 aa).

The tract at residues 1 to 26 (MTAVISLPDPPQRASRGPRVAGPGQD) is disordered. Positions 57–62 (SGGKDS) match the PP-loop motif motif. 3 residues coordinate [4Fe-4S] cluster: Cys132, Cys135, and Cys223.

It belongs to the TtcA family. In terms of assembly, homodimer. Mg(2+) is required as a cofactor. [4Fe-4S] cluster serves as cofactor.

The protein localises to the cytoplasm. The enzyme catalyses cytidine(32) in tRNA + S-sulfanyl-L-cysteinyl-[cysteine desulfurase] + AH2 + ATP = 2-thiocytidine(32) in tRNA + L-cysteinyl-[cysteine desulfurase] + A + AMP + diphosphate + H(+). The protein operates within tRNA modification. In terms of biological role, catalyzes the ATP-dependent 2-thiolation of cytidine in position 32 of tRNA, to form 2-thiocytidine (s(2)C32). The sulfur atoms are provided by the cysteine/cysteine desulfurase (IscS) system. The polypeptide is tRNA-cytidine(32) 2-sulfurtransferase (Stenotrophomonas maltophilia (strain R551-3)).